Here is a 440-residue protein sequence, read N- to C-terminus: Protein naked cuticle homolog 1 (440 aa).

Gly2 is lipidated: N-myristoyl glycine. Positions 129–164 constitute an EF-hand domain; it reads EEDNRQEWTFTLYDFDNNGKVTREDITSLLHTIYEV. 5 residues coordinate Ca(2+): Asp142, Asp144, Asn146, Lys148, and Asp153. Residues 192 to 204 are compositionally biased toward polar residues; the sequence is RWKNCTQTNTDTP. Disordered regions lie at residues 192-221, 272-379, and 421-440; these read RWKNCTQTNTDTPNPKHKGEKCIEDSKTSE, AAPA…QRPK, and RHEHHHHHEHHHHYHHFYQS. Basic and acidic residues predominate over residues 211–221; it reads EKCIEDSKTSE. The segment covering 272-293 has biased composition (low complexity); it reads AAPATEPAKPTHATRSSNQSRS. Positions 324–336 are enriched in basic residues; sequence RHTHALRSPKTHR. A compositionally biased stretch (pro residues) spans 352–362; sequence APPPPSVPNQT. Residues 422-440 are compositionally biased toward basic residues; the sequence is HEHHHHHEHHHHYHHFYQS.

It belongs to the NKD family.

It localises to the cell membrane. It is found in the cytoplasm. Its function is as follows. Cell autonomous antagonist of the canonical Wnt signaling pathway. May activate a second Wnt signaling pathway that controls planar cell polarity. The sequence is that of Protein naked cuticle homolog 1 (nkd1) from Danio rerio (Zebrafish).